The sequence spans 362 residues: 2-oxoglutarate-dependent dioxygenase lolO1 (362 aa).

The 114-residue stretch at 199–312 (TWNYFLGQPV…RYSLVFFGHL (114 aa)) folds into the Fe2OG dioxygenase domain. Fe cation is bound by residues histidine 222, aspartate 224, and histidine 280. Arginine 303 is a 2-oxoglutarate binding site.

Belongs to the iron/ascorbate-dependent oxidoreductase family. Fe(2+) serves as cofactor.

It participates in alkaloid biosynthesis. In terms of biological role, 2-oxoglutarate-dependent dioxygenase; part of the gene cluster that mediates the biosynthesis of loline alkaloids, potent insecticidal agents composed of a pyrrolizidine ring system and an uncommon ether bridge linking carbons 2 and 7. Lolines are structurally differentiated by the various modifications of the L-amino group and include norloline, loline, N-methylloline, N-acetylloline, N-acetylnorloline, and N-formylloline. The first committed step is the condensation of O-acetyl-L-homoserine (derived from L-aspartic acid) and L-proline, probably catalyzed by the gamma-type pyridoxal 5'-phosphate(PLP)-dependent enzyme lolC, to give the diamino diacid, NACPP. Ensuing cyclization, decarboxylation, and acetylation steps yield 1-exo-acetamidopyrrolizidine (AcAP). LolO is required for installation of the ether bridge upon the pathway intermediate, 1-exo-acetamidopyrrolizidine (AcAP). In sequential 2-oxoglutarate- and O(2)-consuming steps, lolO removes hydrogens from C2 and C7 of AcAP to form both carbon-oxygen bonds in N-acetylnorloline (NANL), the precursor to all other lolines. The enzymes lolD, lolE, lolF and lolT have also been proposed to be involved in the ether-bridge installation. Further processing of the exocyclic moiety of NANL by fungal N-acetamidase (LolN), methyltransferase (LolM), and cytochrome P450 (LolP) enzymes, with occasional involvement of a plant acetyltransferase, generates the other known lolines. LolN transforms NANL to norlonine which is monomethylated and dimethylated to respectively lonine and N-methyllonine (NML) by lolM. LolP catalyzes hydroxylation of the methyl group in N-methylloline (NML) and further oxygenation to N-formylloline (NFL). A plant acetyltransferase is responsible for the acetylation of loline to form N-acetylloline (NAL). LolA might interact with aspartate kinase to prevent feedback inhibition of its activity by these end products and thereby promote production of l-homoserine from l-aspartate. This is 2-oxoglutarate-dependent dioxygenase lolO1 from Epichloe uncinata (Endophyte fungus).